The chain runs to 454 residues: Bifunctional protein GlmU (454 aa).

Residues 1–226 (MALNVVILAA…AIEVEGANNR (226 aa)) are pyrophosphorylase. Residues 8–11 (LAAG), Lys-22, Gln-73, 78–79 (GT), 100–102 (YGD), Gly-137, Glu-151, Asn-166, and Asn-224 contribute to the UDP-N-acetyl-alpha-D-glucosamine site. Asp-102 serves as a coordination point for Mg(2+). Asn-224 lines the Mg(2+) pocket. Positions 227-247 (VQLAQLERAYQAREAEKLMIA) are linker. Positions 248–454 (GANLRDPSRI…GWQRPVKIKK (207 aa)) are N-acetyltransferase. Residues Arg-330 and Lys-348 each contribute to the UDP-N-acetyl-alpha-D-glucosamine site. His-360 serves as the catalytic Proton acceptor. Tyr-363 and Asn-374 together coordinate UDP-N-acetyl-alpha-D-glucosamine. Residues Ala-377, 383-384 (NY), Ser-402, Ala-420, and Arg-437 each bind acetyl-CoA.

This sequence in the N-terminal section; belongs to the N-acetylglucosamine-1-phosphate uridyltransferase family. The protein in the C-terminal section; belongs to the transferase hexapeptide repeat family. Homotrimer. The cofactor is Mg(2+).

The protein resides in the cytoplasm. The enzyme catalyses alpha-D-glucosamine 1-phosphate + acetyl-CoA = N-acetyl-alpha-D-glucosamine 1-phosphate + CoA + H(+). It catalyses the reaction N-acetyl-alpha-D-glucosamine 1-phosphate + UTP + H(+) = UDP-N-acetyl-alpha-D-glucosamine + diphosphate. It functions in the pathway nucleotide-sugar biosynthesis; UDP-N-acetyl-alpha-D-glucosamine biosynthesis; N-acetyl-alpha-D-glucosamine 1-phosphate from alpha-D-glucosamine 6-phosphate (route II): step 2/2. The protein operates within nucleotide-sugar biosynthesis; UDP-N-acetyl-alpha-D-glucosamine biosynthesis; UDP-N-acetyl-alpha-D-glucosamine from N-acetyl-alpha-D-glucosamine 1-phosphate: step 1/1. It participates in bacterial outer membrane biogenesis; LPS lipid A biosynthesis. Its function is as follows. Catalyzes the last two sequential reactions in the de novo biosynthetic pathway for UDP-N-acetylglucosamine (UDP-GlcNAc). The C-terminal domain catalyzes the transfer of acetyl group from acetyl coenzyme A to glucosamine-1-phosphate (GlcN-1-P) to produce N-acetylglucosamine-1-phosphate (GlcNAc-1-P), which is converted into UDP-GlcNAc by the transfer of uridine 5-monophosphate (from uridine 5-triphosphate), a reaction catalyzed by the N-terminal domain. The protein is Bifunctional protein GlmU of Shewanella sp. (strain MR-4).